Reading from the N-terminus, the 295-residue chain is Autophagy-related protein 37 (295 aa).

Residues 5-103 form the ACB domain; the sequence is VDRVFVHALN…LIDTMHRYAT (99 aa). 2 disordered regions span residues 124–162 and 174–201; these read NSPSSSLSSPRPNQSTGAGAQQPQQEPEQASDGEGPLKE and LRSQRQVDLEDDEVDVPTSDRSSGRWQR. A compositionally biased stretch (low complexity) spans 125–153; sequence SPSSSLSSPRPNQSTGAGAQQPQQEPEQA. A glycan (N-linked (GlcNAc...) asparagine) is linked at N136. A helical membrane pass occupies residues 244-264; it reads WLLVKHIFADLVILSVVLLWL.

It belongs to the ATG37 family.

It is found in the peroxisome membrane. Acyl-CoA binding protein which acts as the peroxisome receptor for pexophagy. Required for both micropexophagy and macropexophagy, but not for the cytoplasm to vacuole transport (Cvt) or autophagy pathways. Required for functional micropexophagic apparatus (MIPA) and relocation of ATG11 to the peroxisome-sequestering arms of the vacuole. Binds palmitoyl-CoA but not oleyl-CoA. The polypeptide is Autophagy-related protein 37 (Gibberella zeae (strain ATCC MYA-4620 / CBS 123657 / FGSC 9075 / NRRL 31084 / PH-1) (Wheat head blight fungus)).